The sequence spans 494 residues: Zinc finger and SCAN domain-containing protein 30 (494 aa).

Residues 48 to 130 enclose the SCAN box domain; the sequence is RQKFRQFSYS…TMLEELEKEL (83 aa). Lys197 is covalently cross-linked (Glycyl lysine isopeptide (Lys-Gly) (interchain with G-Cter in SUMO2)). 7 consecutive C2H2-type zinc fingers follow at residues 301 to 323, 329 to 351, 357 to 379, 385 to 407, 413 to 435, 441 to 463, and 469 to 491; these read YECFDCGKAFCQSSKLIRHQRIH, YACKECGKAFSLSSDLVRHQRIH, YECCECGKAFRGSSELIRHRRIH, YECGECGKAFSRSSALIQHKKIH, YECIACGKAFGRSSILIEHQRIH, YECNECGKSFNQSSALTQHQRIH, and YECSECRKTFRHRSGLMQHQRTH.

This sequence belongs to the krueppel C2H2-type zinc-finger protein family.

It is found in the nucleus. Its function is as follows. May be involved in transcriptional regulation. This is Zinc finger and SCAN domain-containing protein 30 (ZSCAN30) from Homo sapiens (Human).